The sequence spans 255 residues: Acetylglutamate kinase (255 aa).

Substrate-binding positions include 40–41 (GG), arginine 62, and asparagine 153.

This sequence belongs to the acetylglutamate kinase family. ArgB subfamily.

The protein resides in the cytoplasm. The enzyme catalyses N-acetyl-L-glutamate + ATP = N-acetyl-L-glutamyl 5-phosphate + ADP. The protein operates within amino-acid biosynthesis; L-arginine biosynthesis; N(2)-acetyl-L-ornithine from L-glutamate: step 2/4. Catalyzes the ATP-dependent phosphorylation of N-acetyl-L-glutamate. The sequence is that of Acetylglutamate kinase from Bacillus cereus (strain ATCC 14579 / DSM 31 / CCUG 7414 / JCM 2152 / NBRC 15305 / NCIMB 9373 / NCTC 2599 / NRRL B-3711).